The primary structure comprises 203 residues: ATP-dependent dethiobiotin synthetase BioD (203 aa).

11-16 (NVGKTI) provides a ligand contact to ATP. Threonine 15 contacts Mg(2+). Residue lysine 31 is part of the active site. Threonine 35 serves as a coordination point for substrate. ATP contacts are provided by residues aspartate 42 and 94 to 97 (EGAG). The Mg(2+) site is built by aspartate 42 and glutamate 94.

This sequence belongs to the dethiobiotin synthetase family. As to quaternary structure, homodimer. Mg(2+) is required as a cofactor.

Its subcellular location is the cytoplasm. It carries out the reaction (7R,8S)-7,8-diammoniononanoate + CO2 + ATP = (4R,5S)-dethiobiotin + ADP + phosphate + 3 H(+). It participates in cofactor biosynthesis; biotin biosynthesis; biotin from 7,8-diaminononanoate: step 1/2. Functionally, catalyzes a mechanistically unusual reaction, the ATP-dependent insertion of CO2 between the N7 and N8 nitrogen atoms of 7,8-diaminopelargonic acid (DAPA, also called 7,8-diammoniononanoate) to form a ureido ring. This Lawsonia intracellularis (strain PHE/MN1-00) protein is ATP-dependent dethiobiotin synthetase BioD.